The primary structure comprises 186 residues: Crossover junction endodeoxyribonuclease RuvC (186 aa).

Active-site residues include aspartate 14, glutamate 73, and aspartate 145. Aspartate 14, glutamate 73, and aspartate 145 together coordinate Mg(2+). The interval 162–186 (GRSLPPSRGRRRSGSRQRWRDYRPS) is disordered. The span at 169–178 (RGRRRSGSRQ) shows a compositional bias: basic residues.

Belongs to the RuvC family. As to quaternary structure, homodimer which binds Holliday junction (HJ) DNA. The HJ becomes 2-fold symmetrical on binding to RuvC with unstacked arms; it has a different conformation from HJ DNA in complex with RuvA. In the full resolvosome a probable DNA-RuvA(4)-RuvB(12)-RuvC(2) complex forms which resolves the HJ. It depends on Mg(2+) as a cofactor.

It localises to the cytoplasm. It carries out the reaction Endonucleolytic cleavage at a junction such as a reciprocal single-stranded crossover between two homologous DNA duplexes (Holliday junction).. Functionally, the RuvA-RuvB-RuvC complex processes Holliday junction (HJ) DNA during genetic recombination and DNA repair. Endonuclease that resolves HJ intermediates. Cleaves cruciform DNA by making single-stranded nicks across the HJ at symmetrical positions within the homologous arms, yielding a 5'-phosphate and a 3'-hydroxyl group; requires a central core of homology in the junction. The consensus cleavage sequence is 5'-(A/T)TT(C/G)-3'. Cleavage occurs on the 3'-side of the TT dinucleotide at the point of strand exchange. HJ branch migration catalyzed by RuvA-RuvB allows RuvC to scan DNA until it finds its consensus sequence, where it cleaves and resolves the cruciform DNA. This is Crossover junction endodeoxyribonuclease RuvC from Chromohalobacter salexigens (strain ATCC BAA-138 / DSM 3043 / CIP 106854 / NCIMB 13768 / 1H11).